A 272-amino-acid chain; its full sequence is uncharacterized protein (272 aa).

Active-site residues include D71 and E163.

Belongs to the glycosyl hydrolase 25 family.

This is an uncharacterized protein from Escherichia coli (strain K12).